Here is a 242-residue protein sequence, read N- to C-terminus: Small ribosomal subunit protein eS4 (242 aa).

The 64-residue stretch at 43-106 folds into the S4 RNA-binding domain; sequence LPLMIIVRDI…GDVYRVLPDE (64 aa).

Belongs to the eukaryotic ribosomal protein eS4 family.

The sequence is that of Small ribosomal subunit protein eS4 (rps4e) from Methanothermobacter thermautotrophicus (strain ATCC 29096 / DSM 1053 / JCM 10044 / NBRC 100330 / Delta H) (Methanobacterium thermoautotrophicum).